A 49-amino-acid polypeptide reads, in one-letter code: Glycolactin (49 aa).

Belongs to the pancreatic ribonuclease family. Post-translationally, glycosylated. In terms of tissue distribution, milk.

The protein localises to the secreted. Functionally, manifests poly C-specific RNase activity toward yeast tRNA, elicits a dose-dependent inhibition of cell-free translation, inhibits formation of superoxide ions in vitro and inhibits the hemagglutinating activities of soybean lectin and Ricinus communis agglutinin 120. Inhibits HIV-1 reverse transcriptase. The chain is Glycolactin from Bos taurus (Bovine).